The primary structure comprises 256 residues: Indole-3-glycerol phosphate synthase (256 aa).

Belongs to the TrpC family.

It carries out the reaction 1-(2-carboxyphenylamino)-1-deoxy-D-ribulose 5-phosphate + H(+) = (1S,2R)-1-C-(indol-3-yl)glycerol 3-phosphate + CO2 + H2O. Its pathway is amino-acid biosynthesis; L-tryptophan biosynthesis; L-tryptophan from chorismate: step 4/5. In Chlorobaculum tepidum (strain ATCC 49652 / DSM 12025 / NBRC 103806 / TLS) (Chlorobium tepidum), this protein is Indole-3-glycerol phosphate synthase.